The following is a 172-amino-acid chain: Large ribosomal subunit protein uL10 (172 aa).

This sequence belongs to the universal ribosomal protein uL10 family. As to quaternary structure, part of the ribosomal stalk of the 50S ribosomal subunit. The N-terminus interacts with L11 and the large rRNA to form the base of the stalk. The C-terminus forms an elongated spine to which L12 dimers bind in a sequential fashion forming a multimeric L10(L12)X complex.

In terms of biological role, forms part of the ribosomal stalk, playing a central role in the interaction of the ribosome with GTP-bound translation factors. The polypeptide is Large ribosomal subunit protein uL10 (Afipia carboxidovorans (strain ATCC 49405 / DSM 1227 / KCTC 32145 / OM5) (Oligotropha carboxidovorans)).